The sequence spans 231 residues: Cytochrome b-c1 complex subunit Rieske, mitochondrial (231 aa).

The N-terminal 24 residues, 1 to 24 (MAPVSIVSRAAMRAAAAPARAVRA), are a transit peptide targeting the mitochondrion. A propeptide spans 25-32 (LTTSTALQ) (removed in mature form). Residues 33 to 65 (GSSSSTFESPFKGESKAAKVPDFGKYMSKAPPS) lie on the Mitochondrial matrix side of the membrane. The chain crosses the membrane as a helical span at residues 66 to 95 (TNMLFSYFMVGTMGAITAAGAKSTIQEFLK). Residues 96–231 (NMSASADVLA…FPEEGKLVIG (136 aa)) are Mitochondrial intermembrane-facing. In terms of domain architecture, Rieske spans 134–229 (RHRTPAEIEE…YEFPEEGKLV (96 aa)). [2Fe-2S] cluster-binding residues include C174, H176, C193, and H196. Cysteines 179 and 195 form a disulfide.

The protein belongs to the Rieske iron-sulfur protein family. As to quaternary structure, component of the ubiquinol-cytochrome c oxidoreductase (cytochrome b-c1 complex, complex III, CIII), a multisubunit enzyme composed of 10 subunits. The complex is composed of 3 respiratory subunits cytochrome b (cob), cytochrome c1 (cyt-1) and Rieske protein (fes-1), 2 core protein subunits pep and ucr-1, and 5 low-molecular weight protein subunits qcr6, qcr7, qcr8, qcr9 and probably NCU16844/qcr10. The complex exists as an obligatory dimer and forms supercomplexes (SCs) in the inner mitochondrial membrane with NADH-ubiquinone oxidoreductase (complex I, CI) and cytochrome c oxidase (complex IV, CIV), resulting in different assemblies (supercomplexes SCI(1)III(2), SCIII(2)IV(1) and SCIII(2)IV(2) as well as higher order I(x)III(y)IV(z) megacomplexes). [2Fe-2S] cluster serves as cofactor. Processed by both the mitochondrial processing peptidase (MPP) and the mitochondrial intermediate protease (MIP). Initially, MPP removes 25 amino acids from the newly imported precursor in the mitochondrial matrix. This proteolytic processing is then followed by a second proteolytic cleavage by MIP, which removes an octapeptide to generate mature-sized Rieske protein.

The protein resides in the mitochondrion inner membrane. It catalyses the reaction a quinol + 2 Fe(III)-[cytochrome c](out) = a quinone + 2 Fe(II)-[cytochrome c](out) + 2 H(+)(out). Functionally, component of the ubiquinol-cytochrome c oxidoreductase, a multisubunit transmembrane complex that is part of the mitochondrial electron transport chain which drives oxidative phosphorylation. The respiratory chain contains 3 multisubunit complexes succinate dehydrogenase (complex II, CII), ubiquinol-cytochrome c oxidoreductase (cytochrome b-c1 complex, complex III, CIII) and cytochrome c oxidase (complex IV, CIV), that cooperate to transfer electrons derived from NADH and succinate to molecular oxygen, creating an electrochemical gradient over the inner membrane that drives transmembrane transport and the ATP synthase. The cytochrome b-c1 complex catalyzes electron transfer from ubiquinol to cytochrome c, linking this redox reaction to translocation of protons across the mitochondrial inner membrane, with protons being carried across the membrane as hydrogens on the quinol. In the process called Q cycle, 2 protons are consumed from the matrix, 4 protons are released into the intermembrane space and 2 electrons are passed to cytochrome c. The Rieske protein is a catalytic core subunit containing a [2Fe-2S] iron-sulfur cluster. It cycles between 2 conformational states during catalysis to transfer electrons from the quinol bound in the Q(0) site in cytochrome b to cytochrome c1. The protein is Cytochrome b-c1 complex subunit Rieske, mitochondrial (fes-1) of Neurospora crassa (strain ATCC 24698 / 74-OR23-1A / CBS 708.71 / DSM 1257 / FGSC 987).